The primary structure comprises 840 residues: DNA gyrase subunit A (840 aa).

The region spanning 51 to 516 is the Topo IIA-type catalytic domain; the sequence is LPDVRDGFKP…VSSHIDDEDL (466 aa). The active-site O-(5'-phospho-DNA)-tyrosine intermediate is the tyrosine 139. Residues 543–549 carry the GyrA-box motif; that stretch reads QRRGGVG.

This sequence belongs to the type II topoisomerase GyrA/ParC subunit family. Heterotetramer, composed of two GyrA and two GyrB chains. In the heterotetramer, GyrA contains the active site tyrosine that forms a transient covalent intermediate with DNA, while GyrB binds cofactors and catalyzes ATP hydrolysis.

It is found in the cytoplasm. It catalyses the reaction ATP-dependent breakage, passage and rejoining of double-stranded DNA.. Its function is as follows. A type II topoisomerase that negatively supercoils closed circular double-stranded (ds) DNA in an ATP-dependent manner to modulate DNA topology and maintain chromosomes in an underwound state. Negative supercoiling favors strand separation, and DNA replication, transcription, recombination and repair, all of which involve strand separation. Also able to catalyze the interconversion of other topological isomers of dsDNA rings, including catenanes and knotted rings. Type II topoisomerases break and join 2 DNA strands simultaneously in an ATP-dependent manner. The polypeptide is DNA gyrase subunit A (Ureaplasma parvum serovar 3 (strain ATCC 700970)).